The sequence spans 415 residues: Multidrug resistance protein MdtA (415 aa).

An N-terminal signal peptide occupies residues M1–A21. The segment covering S34–P47 has biased composition (polar residues). 2 disordered regions span residues S34–A60 and E392–S415. The span at P399–S415 shows a compositional bias: basic and acidic residues.

It belongs to the membrane fusion protein (MFP) (TC 8.A.1) family. Part of a tripartite efflux system composed of MdtA, MdtB and MdtC.

Its subcellular location is the cell inner membrane. In terms of biological role, the MdtABC tripartite complex confers resistance against novobiocin and deoxycholate. The protein is Multidrug resistance protein MdtA of Escherichia fergusonii (strain ATCC 35469 / DSM 13698 / CCUG 18766 / IAM 14443 / JCM 21226 / LMG 7866 / NBRC 102419 / NCTC 12128 / CDC 0568-73).